Here is a 217-residue protein sequence, read N- to C-terminus: ATP phosphoribosyltransferase (217 aa).

This sequence belongs to the ATP phosphoribosyltransferase family. Short subfamily. As to quaternary structure, heteromultimer composed of HisG and HisZ subunits.

It is found in the cytoplasm. It carries out the reaction 1-(5-phospho-beta-D-ribosyl)-ATP + diphosphate = 5-phospho-alpha-D-ribose 1-diphosphate + ATP. It participates in amino-acid biosynthesis; L-histidine biosynthesis; L-histidine from 5-phospho-alpha-D-ribose 1-diphosphate: step 1/9. In terms of biological role, catalyzes the condensation of ATP and 5-phosphoribose 1-diphosphate to form N'-(5'-phosphoribosyl)-ATP (PR-ATP). Has a crucial role in the pathway because the rate of histidine biosynthesis seems to be controlled primarily by regulation of HisG enzymatic activity. The chain is ATP phosphoribosyltransferase from Parasynechococcus marenigrum (strain WH8102).